A 167-amino-acid chain; its full sequence is Transcription factor E (167 aa).

Positions 5–87 (ENPIHRAYLL…LWKICPESLD (83 aa)) constitute an HTH TFE/IIEalpha-type domain.

It belongs to the TFE family. Monomer. Interaction with RNA polymerase subunits RpoF and RpoE is necessary for Tfe stimulatory transcription activity. Able to interact with Tbp and RNA polymerase in the absence of DNA promoter. Interacts both with the preinitiation and elongation complexes.

Its function is as follows. Transcription factor that plays a role in the activation of archaeal genes transcribed by RNA polymerase. Facilitates transcription initiation by enhancing TATA-box recognition by TATA-box-binding protein (Tbp), and transcription factor B (Tfb) and RNA polymerase recruitment. Not absolutely required for transcription in vitro, but particularly important in cases where Tbp or Tfb function is not optimal. It dynamically alters the nucleic acid-binding properties of RNA polymerases by stabilizing the initiation complex and destabilizing elongation complexes. Seems to translocate with the RNA polymerase following initiation and acts by binding to the non template strand of the transcription bubble in elongation complexes. In Methanothrix thermoacetophila (strain DSM 6194 / JCM 14653 / NBRC 101360 / PT) (Methanosaeta thermophila), this protein is Transcription factor E.